A 401-amino-acid polypeptide reads, in one-letter code: S-adenosylmethionine synthase (401 aa).

ATP is bound at residue 135–140; it reads GHGSGD.

Belongs to the AdoMet synthase 2 family. The cofactor is Mg(2+).

It carries out the reaction L-methionine + ATP + H2O = S-adenosyl-L-methionine + phosphate + diphosphate. Its pathway is amino-acid biosynthesis; S-adenosyl-L-methionine biosynthesis; S-adenosyl-L-methionine from L-methionine: step 1/1. Its function is as follows. Catalyzes the formation of S-adenosylmethionine from methionine and ATP. This Methanothermobacter marburgensis (strain ATCC BAA-927 / DSM 2133 / JCM 14651 / NBRC 100331 / OCM 82 / Marburg) (Methanobacterium thermoautotrophicum) protein is S-adenosylmethionine synthase (mat).